The sequence spans 124 residues: Small ribosomal subunit protein uS12 (124 aa).

Positions 1–22 (MATVNQLVRKPRQKPDAKSNVA) are disordered. A 3-methylthioaspartic acid modification is found at aspartate 89.

This sequence belongs to the universal ribosomal protein uS12 family. Part of the 30S ribosomal subunit. Contacts proteins S8 and S17. May interact with IF1 in the 30S initiation complex.

With S4 and S5 plays an important role in translational accuracy. Functionally, interacts with and stabilizes bases of the 16S rRNA that are involved in tRNA selection in the A site and with the mRNA backbone. Located at the interface of the 30S and 50S subunits, it traverses the body of the 30S subunit contacting proteins on the other side and probably holding the rRNA structure together. The combined cluster of proteins S8, S12 and S17 appears to hold together the shoulder and platform of the 30S subunit. The polypeptide is Small ribosomal subunit protein uS12 (Pseudoalteromonas atlantica (strain T6c / ATCC BAA-1087)).